A 506-amino-acid chain; its full sequence is Maturase K (506 aa).

The protein belongs to the intron maturase 2 family. MatK subfamily.

It is found in the plastid. The protein resides in the chloroplast. In terms of biological role, usually encoded in the trnK tRNA gene intron. Probably assists in splicing its own and other chloroplast group II introns. The sequence is that of Maturase K from Carica papaya (Papaya).